Here is a 779-residue protein sequence, read N- to C-terminus: Molybdenum cofactor sulfurase (779 aa).

An N6-(pyridoxal phosphate)lysine modification is found at Lys-247. Residue Cys-409 is part of the active site. The region spanning 624-779 (SQSLGLEGVR…LTCGDVIVVS (156 aa)) is the MOSC domain. Phosphoserine is present on Ser-732.

This sequence belongs to the class-V pyridoxal-phosphate-dependent aminotransferase family. MOCOS subfamily. Requires pyridoxal 5'-phosphate as cofactor.

It catalyses the reaction Mo-molybdopterin + L-cysteine + AH2 = thio-Mo-molybdopterin + L-alanine + A + H2O. The protein operates within cofactor biosynthesis; molybdopterin biosynthesis. Sulfurates the molybdenum cofactor. Sulfation of molybdenum is essential for xanthine dehydrogenase (XDH) and aldehyde oxidase (ADO) enzymes in which molybdenum cofactor is liganded by 1 oxygen and 1 sulfur atom in active form. This chain is Molybdenum cofactor sulfurase, found in Drosophila mojavensis (Fruit fly).